The primary structure comprises 837 residues: Protein translocase subunit SecA (837 aa).

ATP-binding positions include Gln85, Gly103–Thr107, and Asp493. Zn(2+) contacts are provided by Cys821, Cys823, Cys832, and His833.

Belongs to the SecA family. In terms of assembly, monomer and homodimer. Part of the essential Sec protein translocation apparatus which comprises SecA, SecYEG and auxiliary proteins SecDF. Other proteins may also be involved. Zn(2+) is required as a cofactor.

It is found in the cell membrane. It localises to the cytoplasm. It carries out the reaction ATP + H2O + cellular proteinSide 1 = ADP + phosphate + cellular proteinSide 2.. Functionally, part of the Sec protein translocase complex. Interacts with the SecYEG preprotein conducting channel. Has a central role in coupling the hydrolysis of ATP to the transfer of proteins into and across the cell membrane, serving as an ATP-driven molecular motor driving the stepwise translocation of polypeptide chains across the membrane. This Streptococcus pneumoniae serotype 2 (strain D39 / NCTC 7466) protein is Protein translocase subunit SecA.